The primary structure comprises 145 residues: Transcriptional regulator MraZ (145 aa).

SpoVT-AbrB domains are found at residues 7–54 and 83–126; these read NATN…GPDL and GVFM…QPQA.

Belongs to the MraZ family. As to quaternary structure, forms oligomers.

The protein resides in the cytoplasm. Its subcellular location is the nucleoid. This Rhizobium leguminosarum bv. trifolii (strain WSM2304) protein is Transcriptional regulator MraZ.